A 448-amino-acid polypeptide reads, in one-letter code: Tubulin beta-2 chain (448 aa).

The GTP site is built by glutamine 11, glutamate 69, serine 138, glycine 142, threonine 143, glycine 144, asparagine 204, and asparagine 226. Glutamate 69 contributes to the Mg(2+) binding site. The segment at 421–448 is disordered; it reads EYQQYQDATADEDGEYEDELDGQEEEDM. Residues 429-448 show a composition bias toward acidic residues; sequence TADEDGEYEDELDGQEEEDM.

It belongs to the tubulin family. Dimer of alpha and beta chains. A typical microtubule is a hollow water-filled tube with an outer diameter of 25 nm and an inner diameter of 15 nM. Alpha-beta heterodimers associate head-to-tail to form protofilaments running lengthwise along the microtubule wall with the beta-tubulin subunit facing the microtubule plus end conferring a structural polarity. Microtubules usually have 13 protofilaments but different protofilament numbers can be found in some organisms and specialized cells. It depends on Mg(2+) as a cofactor.

It is found in the cytoplasm. Its subcellular location is the cytoskeleton. Its function is as follows. Tubulin is the major constituent of microtubules, a cylinder consisting of laterally associated linear protofilaments composed of alpha- and beta-tubulin heterodimers. Microtubules grow by the addition of GTP-tubulin dimers to the microtubule end, where a stabilizing cap forms. Below the cap, tubulin dimers are in GDP-bound state, owing to GTPase activity of alpha-tubulin. The chain is Tubulin beta-2 chain (TUBB2) from Eleusine indica (Goosegrass).